The following is a 163-amino-acid chain: MPSFDIVSEITMHEVNNAVENANRALSSRYDFRGVEAVIELNEKNETVKVTTESDFQLEQLIEILIGACVKRGIDSTSLDIPAESEHHGKLYSKEIKLKQGIETEIAKKITKLIKDSKLKVQTQIQGEQVRVTGKSRDDLQSVIQLVKGADLGQPFQFNNFRD.

This sequence belongs to the YajQ family.

In terms of biological role, nucleotide-binding protein. In Actinobacillus succinogenes (strain ATCC 55618 / DSM 22257 / CCUG 43843 / 130Z), this protein is Nucleotide-binding protein Asuc_2113.